The chain runs to 251 residues: Flap endonuclease Xni (251 aa).

Asp104 lines the Mg(2+) pocket. Residues 160 to 249 (VLPQQLPDYW…IDGNLQQLRL (90 aa)) enclose the 5'-3' exonuclease domain. K(+) is bound by residues Leu171, Ala172, Pro180, Val182, and Ile185. The tract at residues 184 to 189 (GIGPKS) is interaction with DNA.

This sequence belongs to the Xni family. Mg(2+) serves as cofactor. The cofactor is K(+).

Has flap endonuclease activity. During DNA replication, flap endonucleases cleave the 5'-overhanging flap structure that is generated by displacement synthesis when DNA polymerase encounters the 5'-end of a downstream Okazaki fragment. The sequence is that of Flap endonuclease Xni from Citrobacter koseri (strain ATCC BAA-895 / CDC 4225-83 / SGSC4696).